We begin with the raw amino-acid sequence, 641 residues long: Chaperone protein DnaK (641 aa).

Phosphothreonine; by autocatalysis is present on Thr200. Residues Ala605–Lys623 are compositionally biased toward low complexity. The segment at Ala605–Asp627 is disordered.

The protein belongs to the heat shock protein 70 family.

In terms of biological role, acts as a chaperone. This Xanthomonas oryzae pv. oryzae (strain MAFF 311018) protein is Chaperone protein DnaK.